A 225-amino-acid polypeptide reads, in one-letter code: ATP-dependent dethiobiotin synthetase BioD 1 (225 aa).

13–18 lines the ATP pocket; sequence EVGKTV. T17 contributes to the Mg(2+) binding site. The active site involves K38. S42 serves as a coordination point for substrate. Residues D55, 116–119, 176–177, 205–207, and E212 contribute to the ATP site; these read EGAG, ND, and PWL. Mg(2+) is bound by residues D55 and E116.

It belongs to the dethiobiotin synthetase family. Homodimer. Mg(2+) is required as a cofactor.

It localises to the cytoplasm. It catalyses the reaction (7R,8S)-7,8-diammoniononanoate + CO2 + ATP = (4R,5S)-dethiobiotin + ADP + phosphate + 3 H(+). The protein operates within cofactor biosynthesis; biotin biosynthesis; biotin from 7,8-diaminononanoate: step 1/2. Catalyzes a mechanistically unusual reaction, the ATP-dependent insertion of CO2 between the N7 and N8 nitrogen atoms of 7,8-diaminopelargonic acid (DAPA, also called 7,8-diammoniononanoate) to form a ureido ring. This chain is ATP-dependent dethiobiotin synthetase BioD 1, found in Escherichia coli O157:H7.